The following is a 142-amino-acid chain: Transcriptional regulator MraZ (142 aa).

SpoVT-AbrB domains follow at residues 5-51 (ASSL…PRTE) and 77-120 (AMDV…DKAT).

It belongs to the MraZ family. In terms of assembly, forms oligomers.

The protein localises to the cytoplasm. The protein resides in the nucleoid. The chain is Transcriptional regulator MraZ from Delftia acidovorans (strain DSM 14801 / SPH-1).